We begin with the raw amino-acid sequence, 117 residues long: Protein Wnt-10b (117 aa).

A lipid anchor (O-palmitoleoyl serine; by PORCN) is attached at S1. A disulfide bond links C83 and C98. N84 carries an N-linked (GlcNAc...) asparagine glycan.

Belongs to the Wnt family. Post-translationally, palmitoleoylation is required for efficient binding to frizzled receptors. Depalmitoleoylation leads to Wnt signaling pathway inhibition.

The protein resides in the secreted. Its subcellular location is the extracellular space. It localises to the extracellular matrix. Member of the Wnt ligand gene family that encodes for secreted proteins, which activate the Wnt signaling cascade. Involved in neurogenesis. Performs a partially redundant function with wnt1 in the formation of the midbrain-hindbrain boundary (MHB) organizer. This chain is Protein Wnt-10b (WNT-10B), found in Plethodon jordani (Red-cheeked salamander).